A 340-amino-acid polypeptide reads, in one-letter code: Ketol-acid reductoisomerase (NADP(+)) (340 aa).

The 181-residue stretch at 3–183 folds into the KARI N-terminal Rossmann domain; that stretch reads VSIYYDKDCD…GGGRTGIIET (181 aa). Residues 26 to 29, K49, S54, and 84 to 87 each bind NADP(+); these read FGSQ and DEIQ. H109 is an active-site residue. Residue G135 coordinates NADP(+). Residues 184 to 329 form the KARI C-terminal knotted domain; it reads TFKAETETDL…RELRAMMPWI (146 aa). The Mg(2+) site is built by D192, E196, E228, and E232. S253 lines the substrate pocket.

This sequence belongs to the ketol-acid reductoisomerase family. The cofactor is Mg(2+).

It carries out the reaction (2R)-2,3-dihydroxy-3-methylbutanoate + NADP(+) = (2S)-2-acetolactate + NADPH + H(+). It catalyses the reaction (2R,3R)-2,3-dihydroxy-3-methylpentanoate + NADP(+) = (S)-2-ethyl-2-hydroxy-3-oxobutanoate + NADPH + H(+). It functions in the pathway amino-acid biosynthesis; L-isoleucine biosynthesis; L-isoleucine from 2-oxobutanoate: step 2/4. Its pathway is amino-acid biosynthesis; L-valine biosynthesis; L-valine from pyruvate: step 2/4. In terms of biological role, involved in the biosynthesis of branched-chain amino acids (BCAA). Catalyzes an alkyl-migration followed by a ketol-acid reduction of (S)-2-acetolactate (S2AL) to yield (R)-2,3-dihydroxy-isovalerate. In the isomerase reaction, S2AL is rearranged via a Mg-dependent methyl migration to produce 3-hydroxy-3-methyl-2-ketobutyrate (HMKB). In the reductase reaction, this 2-ketoacid undergoes a metal-dependent reduction by NADPH to yield (R)-2,3-dihydroxy-isovalerate. The chain is Ketol-acid reductoisomerase (NADP(+)) from Campylobacter lari (strain RM2100 / D67 / ATCC BAA-1060).